Here is a 331-residue protein sequence, read N- to C-terminus: Nodulation protein D 2 (331 aa).

One can recognise an HTH lysR-type domain in the interval 6-63; that stretch reads LDLNLLVALDALMTERSLTAAARKINLSQPAMSAAVARLRSYFRDELFAMRGRKLVPT. A DNA-binding region (H-T-H motif) is located at residues 23-42; the sequence is LTAAARKINLSQPAMSAAVA.

Belongs to the LysR transcriptional regulatory family.

Its function is as follows. NodD regulates the expression of the nodABCFE genes which encode other nodulation proteins. NodD is also a negative regulator of its own expression. Binds flavonoids as inducers. The protein is Nodulation protein D 2 (nodD2) of Bradyrhizobium elkanii.